Reading from the N-terminus, the 174-residue chain is UPF0336 protein MAP_3996c (174 aa).

Residues 11–131 (IGSHYRAPDY…VLAEIRSEVT (121 aa)) enclose the MaoC-like domain.

This sequence belongs to the UPF0336 family.

This chain is UPF0336 protein MAP_3996c, found in Mycolicibacterium paratuberculosis (strain ATCC BAA-968 / K-10) (Mycobacterium paratuberculosis).